The sequence spans 131 residues: Large ribosomal subunit protein bL17 (131 aa).

It belongs to the bacterial ribosomal protein bL17 family. In terms of assembly, part of the 50S ribosomal subunit. Contacts protein L32.

This is Large ribosomal subunit protein bL17 from Teredinibacter turnerae (strain ATCC 39867 / T7901).